Reading from the N-terminus, the 614-residue chain is MNKIHLLDEKTINKISAGEVVERPASIVKELIENSIDAGSKNITVEILEGGIPYIKVSDDGCGMNEIDAILAFERHATSKIKSDNDLYSIGTLGFRGEALASIAAVSHVTLQTKEEGALFGTKVVVEGGKVVEKTTCGCAKGCSIEVRDVFFNTPARRKFLKRPSTESMYIIDVVTKLCLSHPEVSFKYVKDRKLQFITSGNGNIEDVILRLFGNEVYSSLMSASFESEDLKLKILAGKNSLNYSNRNMQFFYVNGRYVKNKTLSAAVDEAFKTYIPVNRYPAVFLYMEIDPRQIDVNIHPSKLEIKFSDERRIFEAVYKTIKDSLHKYNLIPEVKIEEKKNIFEIETPTISAEQTKLYLTSSDKELEEEKKKFDNEFKGKNVFLKDNVLKENSKNSSLDNHLAVYEEYEHEKEEINKNDLAKKISDIRIVGTLFSTYIIVEKEDVFYIIDQHAAHERILYEKFTSQYEKIQTRQVTFPIVVELQPRDLELVHQEKELLNKLGYVFEEFGNNCIILREVPVILGQPEARQLFIDIVEKLKDKELINKISLKEENIIMMACKAAVKAMDNLSEKEIHKLFDDLKITENPYTCPHGRPVIIAITKTQLEKMFKRIM.

This sequence belongs to the DNA mismatch repair MutL/HexB family.

Functionally, this protein is involved in the repair of mismatches in DNA. It is required for dam-dependent methyl-directed DNA mismatch repair. May act as a 'molecular matchmaker', a protein that promotes the formation of a stable complex between two or more DNA-binding proteins in an ATP-dependent manner without itself being part of a final effector complex. The chain is DNA mismatch repair protein MutL from Thermoanaerobacter sp. (strain X514).